The following is a 416-amino-acid chain: Serine hydroxymethyltransferase 1 (416 aa).

(6S)-5,6,7,8-tetrahydrofolate is bound by residues leucine 121 and 125-127 (GHL). Lysine 229 carries the post-translational modification N6-(pyridoxal phosphate)lysine. Residues glutamate 245 and 354–356 (SPF) contribute to the (6S)-5,6,7,8-tetrahydrofolate site.

The protein belongs to the SHMT family. As to quaternary structure, homodimer. Pyridoxal 5'-phosphate serves as cofactor.

It localises to the cytoplasm. It carries out the reaction (6R)-5,10-methylene-5,6,7,8-tetrahydrofolate + glycine + H2O = (6S)-5,6,7,8-tetrahydrofolate + L-serine. It participates in one-carbon metabolism; tetrahydrofolate interconversion. The protein operates within amino-acid biosynthesis; glycine biosynthesis; glycine from L-serine: step 1/1. In terms of biological role, catalyzes the reversible interconversion of serine and glycine with tetrahydrofolate (THF) serving as the one-carbon carrier. This reaction serves as the major source of one-carbon groups required for the biosynthesis of purines, thymidylate, methionine, and other important biomolecules. Also exhibits THF-independent aldolase activity toward beta-hydroxyamino acids, producing glycine and aldehydes, via a retro-aldol mechanism. The polypeptide is Serine hydroxymethyltransferase 1 (Vibrio parahaemolyticus serotype O3:K6 (strain RIMD 2210633)).